The chain runs to 408 residues: Arginine biosynthesis bifunctional protein ArgJ (408 aa).

6 residues coordinate substrate: T158, K184, T195, E281, N403, and T408. The active-site Nucleophile is the T195.

The protein belongs to the ArgJ family. As to quaternary structure, heterotetramer of two alpha and two beta chains.

The protein resides in the cytoplasm. It carries out the reaction N(2)-acetyl-L-ornithine + L-glutamate = N-acetyl-L-glutamate + L-ornithine. The enzyme catalyses L-glutamate + acetyl-CoA = N-acetyl-L-glutamate + CoA + H(+). It functions in the pathway amino-acid biosynthesis; L-arginine biosynthesis; L-ornithine and N-acetyl-L-glutamate from L-glutamate and N(2)-acetyl-L-ornithine (cyclic): step 1/1. Its pathway is amino-acid biosynthesis; L-arginine biosynthesis; N(2)-acetyl-L-ornithine from L-glutamate: step 1/4. Its function is as follows. Catalyzes two activities which are involved in the cyclic version of arginine biosynthesis: the synthesis of N-acetylglutamate from glutamate and acetyl-CoA as the acetyl donor, and of ornithine by transacetylation between N(2)-acetylornithine and glutamate. The sequence is that of Arginine biosynthesis bifunctional protein ArgJ from Bacillus thuringiensis subsp. konkukian (strain 97-27).